The chain runs to 342 residues: GTPase Obg (342 aa).

The Obg domain occupies 1–159; the sequence is MQFIDRAEIE…RHLRLELKLL (159 aa). An OBG-type G domain is found at 160–328; sequence AEVGIIGLPN…LLAKVWQQLE (169 aa). GTP-binding positions include 166–173, 191–195, 213–216, 280–283, and 309–311; these read GLPNAGKS, FTTLI, DIPG, NKID, and SAV. Mg(2+)-binding residues include Ser-173 and Thr-193.

The protein belongs to the TRAFAC class OBG-HflX-like GTPase superfamily. OBG GTPase family. As to quaternary structure, monomer. Mg(2+) is required as a cofactor.

It localises to the cytoplasm. An essential GTPase which binds GTP, GDP and possibly (p)ppGpp with moderate affinity, with high nucleotide exchange rates and a fairly low GTP hydrolysis rate. Plays a role in control of the cell cycle, stress response, ribosome biogenesis and in those bacteria that undergo differentiation, in morphogenesis control. The protein is GTPase Obg of Microcystis aeruginosa (strain NIES-843 / IAM M-2473).